We begin with the raw amino-acid sequence, 495 residues long: Probable leucine aminopeptidase 2 (495 aa).

The N-terminal stretch at 1-21 (MKSQLLSLAVAVTTISQGVVG) is a signal peptide. Residues 130–216 (MAELVVAKNN…SQEDGKNLAT (87 aa)) form the PA domain. 2 N-linked (GlcNAc...) asparagine glycosylation sites follow: Asn142 and Asn235. The Zn(2+) site is built by His259 and Asp271. Residue Asn272 is glycosylated (N-linked (GlcNAc...) asparagine). Glu303 serves as the catalytic Proton acceptor. Zn(2+)-binding residues include Glu304 and Asp332. The N-linked (GlcNAc...) asparagine glycan is linked to Asn352. Residue His430 participates in Zn(2+) binding.

It belongs to the peptidase M28 family. M28A subfamily. In terms of assembly, monomer. Requires Zn(2+) as cofactor.

Its subcellular location is the secreted. Its function is as follows. Extracellular aminopeptidase that releases a wide variety of amino acids from natural peptides and contributes to pathogenicity. The chain is Probable leucine aminopeptidase 2 (LAP2) from Arthroderma benhamiae (strain ATCC MYA-4681 / CBS 112371) (Trichophyton mentagrophytes).